The primary structure comprises 265 residues: Sulfur carrier protein FdhD (265 aa).

The Cysteine persulfide intermediate role is filled by cysteine 107.

Belongs to the FdhD family.

It localises to the cytoplasm. Its function is as follows. Required for formate dehydrogenase (FDH) activity. Acts as a sulfur carrier protein that transfers sulfur from IscS to the molybdenum cofactor prior to its insertion into FDH. This Staphylococcus aureus (strain NCTC 8325 / PS 47) protein is Sulfur carrier protein FdhD.